The sequence spans 278 residues: Ribosomal RNA small subunit methyltransferase A (278 aa).

S-adenosyl-L-methionine is bound by residues Asn-28, Leu-30, Gly-55, Glu-77, Asp-103, and Asn-122.

Belongs to the class I-like SAM-binding methyltransferase superfamily. rRNA adenine N(6)-methyltransferase family. RsmA subfamily.

It localises to the cytoplasm. It catalyses the reaction adenosine(1518)/adenosine(1519) in 16S rRNA + 4 S-adenosyl-L-methionine = N(6)-dimethyladenosine(1518)/N(6)-dimethyladenosine(1519) in 16S rRNA + 4 S-adenosyl-L-homocysteine + 4 H(+). Specifically dimethylates two adjacent adenosines (A1518 and A1519) in the loop of a conserved hairpin near the 3'-end of 16S rRNA in the 30S particle. May play a critical role in biogenesis of 30S subunits. This is Ribosomal RNA small subunit methyltransferase A from Cereibacter sphaeroides (strain ATCC 17025 / ATH 2.4.3) (Rhodobacter sphaeroides).